A 117-amino-acid polypeptide reads, in one-letter code: Ig heavy chain V region MOPC 47A (117 aa).

The region spanning Glu-1–Val-113 is the Ig-like domain.

This chain is Ig heavy chain V region MOPC 47A, found in Mus musculus (Mouse).